The primary structure comprises 316 residues: Holliday junction branch migration complex subunit RuvB (316 aa).

A large ATPase domain (RuvB-L) region spans residues 1 to 165; it reads MQITRPHNFE…FGYIARFVSY (165 aa). Residues Arg-5, Gly-46, Lys-49, Thr-50, Ser-51, 112-114, Arg-155, Tyr-165, and Arg-202 contribute to the ATP site; that span reads EDF. A Mg(2+)-binding site is contributed by Thr-50. The small ATPAse domain (RuvB-S) stretch occupies residues 166–236; sequence NAEDMKQIIR…IIKKTFKSLD (71 aa). A head domain (RuvB-H) region spans residues 239–316; it reads EYGLTKDHVE…TYLLKEKLIW (78 aa). DNA is bound by residues Lys-294 and Arg-299.

This sequence belongs to the RuvB family. Homohexamer. Forms an RuvA(8)-RuvB(12)-Holliday junction (HJ) complex. HJ DNA is sandwiched between 2 RuvA tetramers; dsDNA enters through RuvA and exits via RuvB. An RuvB hexamer assembles on each DNA strand where it exits the tetramer. Each RuvB hexamer is contacted by two RuvA subunits (via domain III) on 2 adjacent RuvB subunits; this complex drives branch migration. In the full resolvosome a probable DNA-RuvA(4)-RuvB(12)-RuvC(2) complex forms which resolves the HJ.

The protein localises to the cytoplasm. The enzyme catalyses ATP + H2O = ADP + phosphate + H(+). In terms of biological role, the RuvA-RuvB-RuvC complex processes Holliday junction (HJ) DNA during genetic recombination and DNA repair, while the RuvA-RuvB complex plays an important role in the rescue of blocked DNA replication forks via replication fork reversal (RFR). RuvA specifically binds to HJ cruciform DNA, conferring on it an open structure. The RuvB hexamer acts as an ATP-dependent pump, pulling dsDNA into and through the RuvAB complex. RuvB forms 2 homohexamers on either side of HJ DNA bound by 1 or 2 RuvA tetramers; 4 subunits per hexamer contact DNA at a time. Coordinated motions by a converter formed by DNA-disengaged RuvB subunits stimulates ATP hydrolysis and nucleotide exchange. Immobilization of the converter enables RuvB to convert the ATP-contained energy into a lever motion, pulling 2 nucleotides of DNA out of the RuvA tetramer per ATP hydrolyzed, thus driving DNA branch migration. The RuvB motors rotate together with the DNA substrate, which together with the progressing nucleotide cycle form the mechanistic basis for DNA recombination by continuous HJ branch migration. Branch migration allows RuvC to scan DNA until it finds its consensus sequence, where it cleaves and resolves cruciform DNA. This chain is Holliday junction branch migration complex subunit RuvB, found in Mycoplasmopsis synoviae (strain 53) (Mycoplasma synoviae).